The sequence spans 198 residues: uncharacterized protein (198 aa).

Disordered regions lie at residues 15–69 and 172–198; these read RLGQ…KDTR and FSVK…LWGL. 2 stretches are compositionally biased toward basic and acidic residues: residues 37 to 49 and 56 to 69; these read HKSF…DQSR and FNEK…KDTR. A compositionally biased stretch (low complexity) spans 176–186; the sequence is ESSNLSNNDSD. Acidic residues predominate over residues 187–198; sequence ASLDEDTLLWGL.

Its subcellular location is the nucleus. This is an uncharacterized protein from Schizosaccharomyces pombe (strain 972 / ATCC 24843) (Fission yeast).